A 332-amino-acid polypeptide reads, in one-letter code: MTAPPIRHVPVLGREAVAMLAPRAGGVYVDATFGAGGYSRAILATAETRVIGIDRDPTAIAGGSGLVEESGGRLILVEDRFSHLAAVCAAQDAAAVDGVVMDVGVSSMQLDEAGRGFSFRLDGPLDMRMSGHGPTAAEVVARASETDLADIIYIFGEERRSRAVARAIVGARRHGPIATTRALADIVSKVVRAKPHEIHPATRTFQALRIFVNEELDELIAALAAAERVLKPGGRLAVVSFHSLEDRIVKNFLAWRGKTGGGSRHRPEIERAPPSFAILTKRPLTPGDDEVQANPRARSARLRAAERTDAAAIDDGAELPAWPSLANVMRGG.

S-adenosyl-L-methionine-binding positions include 36–38, Asp-54, Phe-81, Asp-102, and Gln-109; that span reads GGY.

It belongs to the methyltransferase superfamily. RsmH family.

It is found in the cytoplasm. The catalysed reaction is cytidine(1402) in 16S rRNA + S-adenosyl-L-methionine = N(4)-methylcytidine(1402) in 16S rRNA + S-adenosyl-L-homocysteine + H(+). In terms of biological role, specifically methylates the N4 position of cytidine in position 1402 (C1402) of 16S rRNA. The sequence is that of Ribosomal RNA small subunit methyltransferase H from Nitrobacter winogradskyi (strain ATCC 25391 / DSM 10237 / CIP 104748 / NCIMB 11846 / Nb-255).